Here is a 193-residue protein sequence, read N- to C-terminus: Hypoxanthine/guanine phosphoribosyltransferase (193 aa).

Belongs to the purine/pyrimidine phosphoribosyltransferase family. Archaeal HPRT subfamily. In terms of assembly, homodimer.

The protein localises to the cytoplasm. It catalyses the reaction IMP + diphosphate = hypoxanthine + 5-phospho-alpha-D-ribose 1-diphosphate. The enzyme catalyses GMP + diphosphate = guanine + 5-phospho-alpha-D-ribose 1-diphosphate. It functions in the pathway purine metabolism; IMP biosynthesis via salvage pathway; IMP from hypoxanthine: step 1/1. Its function is as follows. Catalyzes a salvage reaction resulting in the formation of IMP that is energically less costly than de novo synthesis. The polypeptide is Hypoxanthine/guanine phosphoribosyltransferase (Methanothermobacter thermautotrophicus (strain ATCC 29096 / DSM 1053 / JCM 10044 / NBRC 100330 / Delta H) (Methanobacterium thermoautotrophicum)).